The following is a 508-amino-acid chain: ATP synthase subunit alpha, chloroplastic (508 aa).

170–177 (GDRQTGKT) serves as a coordination point for ATP.

Belongs to the ATPase alpha/beta chains family. In terms of assembly, F-type ATPases have 2 components, CF(1) - the catalytic core - and CF(0) - the membrane proton channel. CF(1) has five subunits: alpha(3), beta(3), gamma(1), delta(1), epsilon(1). CF(0) has four main subunits: a, b, b' and c.

The protein resides in the plastid. Its subcellular location is the chloroplast thylakoid membrane. It carries out the reaction ATP + H2O + 4 H(+)(in) = ADP + phosphate + 5 H(+)(out). Functionally, produces ATP from ADP in the presence of a proton gradient across the membrane. The alpha chain is a regulatory subunit. In Helianthus annuus (Common sunflower), this protein is ATP synthase subunit alpha, chloroplastic.